A 1210-amino-acid chain; its full sequence is Adenine-specific methyltransferase PglX (1210 aa).

The span at 1181–1194 (KQGEHGLTDDDLRG) shows a compositional bias: basic and acidic residues. A disordered region spans residues 1181–1210 (KQGEHGLTDDDLRGWRPPAATRRRRAAAKQ). Residues 1201-1210 (TRRRRAAAKQ) show a composition bias toward basic residues.

Belongs to the methyltransferase superfamily. PglX adenine methyltransferase family.

The catalysed reaction is a 2'-deoxyadenosine in DNA + S-adenosyl-L-methionine = an N(6)-methyl-2'-deoxyadenosine in DNA + S-adenosyl-L-homocysteine + H(+). In terms of biological role, BREX systems (bacteriophage exclusion) provide immunity against bacteriophage. Part of a type 2 BREX system. Probably a DNA methyltransferase, it methylates phage DNA in vitro in an S-adenosyl-L-methionine-dependent manner. Previously called the phage growth limitation (Pgl) system, it confers protection against bacteriophage phiC31. The bacteria allows one cycle of phage infection, but subsequent cycles are impaired, protecting the original bacterial colony. The system undergoes high rates (10(-3) to 10(-4)) of phase reversion, i.e. loss and regain of phiC31 resistance. When the pglW-pglX-pglY-pglZ genes are transformed into a susceptible S.lividans (strain 1326) they confer resistance to infection by phage phiC31 and phiBT1; all 4 genes are necessary. Probably a toxic component of a type II toxin-antitoxin (TA) system. The toxic activity is inhibited by its cognate antitoxin PglZ. Its function is as follows. May be a subtypes G and alpha restriction enzyme that recognizes and cleaves an unknown sequence. Methylates an adenine residue in the same sequence. The sequence is that of Adenine-specific methyltransferase PglX from Streptomyces coelicolor (strain ATCC BAA-471 / A3(2) / M145).